The primary structure comprises 69 residues: Small ribosomal subunit protein bS21 (69 aa).

The protein belongs to the bacterial ribosomal protein bS21 family.

In Treponema pallidum (strain Nichols), this protein is Small ribosomal subunit protein bS21 (rpsU).